We begin with the raw amino-acid sequence, 344 residues long: Anthranilate phosphoribosyltransferase (344 aa).

5-phospho-alpha-D-ribose 1-diphosphate-binding positions include glycine 80, 83–84 (GD), threonine 88, 90–93 (NVST), 108–116 (KHGNRSVSS), and serine 120. Glycine 80 lines the anthranilate pocket. Position 92 (serine 92) interacts with Mg(2+). Asparagine 111 is an anthranilate binding site. Arginine 166 serves as a coordination point for anthranilate. 2 residues coordinate Mg(2+): aspartate 225 and glutamate 226.

This sequence belongs to the anthranilate phosphoribosyltransferase family. As to quaternary structure, homodimer. The cofactor is Mg(2+).

The enzyme catalyses N-(5-phospho-beta-D-ribosyl)anthranilate + diphosphate = 5-phospho-alpha-D-ribose 1-diphosphate + anthranilate. It functions in the pathway amino-acid biosynthesis; L-tryptophan biosynthesis; L-tryptophan from chorismate: step 2/5. Functionally, catalyzes the transfer of the phosphoribosyl group of 5-phosphorylribose-1-pyrophosphate (PRPP) to anthranilate to yield N-(5'-phosphoribosyl)-anthranilate (PRA). This chain is Anthranilate phosphoribosyltransferase, found in Legionella pneumophila (strain Paris).